Here is a 160-residue protein sequence, read N- to C-terminus: UPF0262 protein Mrad2831_3513 (160 aa).

The protein belongs to the UPF0262 family.

The sequence is that of UPF0262 protein Mrad2831_3513 from Methylobacterium radiotolerans (strain ATCC 27329 / DSM 1819 / JCM 2831 / NBRC 15690 / NCIMB 10815 / 0-1).